The sequence spans 167 residues: uncharacterized protein (167 aa).

Positions 9–167 (PVMRRLTLQD…DCEVRMLREL (159 aa)) constitute an N-acetyltransferase domain.

This sequence belongs to the acetyltransferase family.

This is an uncharacterized protein from Escherichia coli (strain K12).